The chain runs to 662 residues: ATP-dependent zinc metalloprotease YME1 homolog (662 aa).

Position 206–213 (206–213 (GPPGVGKT)) interacts with ATP. Residue His-425 participates in Zn(2+) binding. Glu-426 is a catalytic residue. Zn(2+)-binding residues include His-429 and Asp-503.

The protein in the N-terminal section; belongs to the AAA ATPase family. In the C-terminal section; belongs to the peptidase M41 family. The cofactor is Zn(2+).

Functionally, putative ATP-dependent protease. The sequence is that of ATP-dependent zinc metalloprotease YME1 homolog from Schistosoma mansoni (Blood fluke).